Here is a 149-residue protein sequence, read N- to C-terminus: 3-hydroxyacyl-[acyl-carrier-protein] dehydratase FabZ (149 aa).

The active site involves His53.

Belongs to the thioester dehydratase family. FabZ subfamily.

The protein localises to the cytoplasm. The catalysed reaction is a (3R)-hydroxyacyl-[ACP] = a (2E)-enoyl-[ACP] + H2O. Involved in unsaturated fatty acids biosynthesis. Catalyzes the dehydration of short chain beta-hydroxyacyl-ACPs and long chain saturated and unsaturated beta-hydroxyacyl-ACPs. This chain is 3-hydroxyacyl-[acyl-carrier-protein] dehydratase FabZ, found in Polynucleobacter asymbioticus (strain DSM 18221 / CIP 109841 / QLW-P1DMWA-1) (Polynucleobacter necessarius subsp. asymbioticus).